We begin with the raw amino-acid sequence, 341 residues long: D-aspartate oxidase (341 aa).

D36, R37, T43, S44, M50, G307, I311, and S312 together coordinate FAD. Positions 339–341 (SKL) match the Microbody targeting signal motif.

It belongs to the DAMOX/DASOX family. Dimer or tetramer. Interacts with PEX5; the interaction is direct and required for localization of DDO to the peroxisome. Requires FAD as cofactor. Expressed in the small intestine (at protein level). Expressed in the ependymal cell layer of the telencephalic ventricles, hippocampus, thalamus, cerebellum, midbrain region, pons, olfactory bulbs, and cortex. Repressed in the testis. In terms of tissue distribution, expressed in the kidney, liver, stomach, pancreas, uterus, lactating breast, involuting mammary gland, brain, heart, lung, and skin. As to expression, expressed in kidney, liver, pancreas, and in the mammary gland regardless of lactation status.

It is found in the peroxisome matrix. Its subcellular location is the cytoplasm. The protein resides in the cytosol. The enzyme catalyses D-aspartate + O2 + H2O = oxaloacetate + H2O2 + NH4(+). The catalysed reaction is D-glutamate + O2 + H2O = H2O2 + 2-oxoglutarate + NH4(+). With respect to regulation, inhibited by the benzodiazepine olanzapine; chronic systemic administration of the benzodiazepine increases levels of D-aspartate and L-glutamate in the prefrontal cortex. Efficiently inhibited by 5-aminonicotinic acid (5-AN) and 1,4-Dihydropyrido[2,3-b]pyrazine-2,3-dione (DPPD). Inhibited by aminooxyacetic acid, thiolactomycin, anthranilic acid, malonate, meso-tartrate and L-tartrate. Benzoate has no effect on activity. Its function is as follows. Selectively catalyzes the oxidative deamination of acidic amino acids. Suppresses the level of D-aspartate in the brain, an amino acid that can act as an agonist for glutamate receptors. Protects the organism from the toxicity of D-amino acids. May also function in the intestine. In terms of biological role, selectively catalyzes the oxidative deamination of acidic amino acids. Functionally, does not exhibit D-aspartate oxidase activity. This is D-aspartate oxidase (Ddo) from Mus musculus (Mouse).